Here is a 170-residue protein sequence, read N- to C-terminus: Probable chemoreceptor glutamine deamidase CheD 3 (170 aa).

This sequence belongs to the CheD family.

The catalysed reaction is L-glutaminyl-[protein] + H2O = L-glutamyl-[protein] + NH4(+). In terms of biological role, probably deamidates glutamine residues to glutamate on methyl-accepting chemotaxis receptors (MCPs), playing an important role in chemotaxis. The protein is Probable chemoreceptor glutamine deamidase CheD 3 of Dechloromonas aromatica (strain RCB).